The sequence spans 156 residues: Small ribosomal subunit protein uS7 (156 aa).

Belongs to the universal ribosomal protein uS7 family. As to quaternary structure, part of the 30S ribosomal subunit. Contacts proteins S9 and S11.

One of the primary rRNA binding proteins, it binds directly to 16S rRNA where it nucleates assembly of the head domain of the 30S subunit. Is located at the subunit interface close to the decoding center, probably blocks exit of the E-site tRNA. This is Small ribosomal subunit protein uS7 from Shewanella halifaxensis (strain HAW-EB4).